Reading from the N-terminus, the 141-residue chain is Large-conductance mechanosensitive channel (141 aa).

The next 3 helical transmembrane spans lie at 8 to 28 (FALK…AAFG), 38 to 58 (IIMP…FFPL), and 80 to 100 (GNFL…FLIV).

Belongs to the MscL family. In terms of assembly, homopentamer.

It is found in the cell inner membrane. Channel that opens in response to stretch forces in the membrane lipid bilayer. May participate in the regulation of osmotic pressure changes within the cell. The sequence is that of Large-conductance mechanosensitive channel from Beijerinckia indica subsp. indica (strain ATCC 9039 / DSM 1715 / NCIMB 8712).